The primary structure comprises 224 residues: Glutathione S-transferase U4 (224 aa).

The region spanning 6-85 is the GST N-terminal domain; the sequence is EDVKLLGFWA…YIDQIWKNNP (80 aa). Glutathione contacts are provided by residues 16–17, 42–43, 56–57, and 69–70; these read SP, NK, KV, and ES. A GST C-terminal domain is found at 90 to 217; the sequence is DPYEKAMALF…EEQIEHMKKV (128 aa). Residue threonine 151 is modified to Phosphothreonine.

The protein belongs to the GST superfamily. Tau family.

It localises to the cytoplasm. It is found in the cytosol. The enzyme catalyses RX + glutathione = an S-substituted glutathione + a halide anion + H(+). May be involved in the conjugation of reduced glutathione to a wide number of exogenous and endogenous hydrophobic electrophiles and have a detoxification role against certain herbicides. In Arabidopsis thaliana (Mouse-ear cress), this protein is Glutathione S-transferase U4 (GSTU4).